Here is a 450-residue protein sequence, read N- to C-terminus: Putative zinc metalloprotease TP_0600 (450 aa).

Histidine 18 provides a ligand contact to Zn(2+). Glutamate 19 is an active-site residue. Histidine 22 serves as a coordination point for Zn(2+). A helical membrane pass occupies residues 102–124; sequence IAFAGPLANVLMAVMVLALVSAL. The PDZ domain occupies 200–278; that stretch reads TITPDRDAHT…SVVLTVLRSG (79 aa). The next 2 membrane-spanning stretches (helical) occupy residues 384 to 406 and 421 to 443; these read VCVS…LILF and VLYY…AFWN.

Belongs to the peptidase M50B family. Requires Zn(2+) as cofactor.

The protein resides in the cell inner membrane. This chain is Putative zinc metalloprotease TP_0600, found in Treponema pallidum (strain Nichols).